Consider the following 414-residue polypeptide: Phthiocerol/phthiodiolone dimycocerosyl transferase (414 aa).

H118 serves as the catalytic Proton acceptor.

The protein belongs to the acyltransferase PapA5 family. Monomer. Interacts directly with the acyl carrier protein (ACP) domain of the mycocerosic acid synthase (mas) protein.

The catalysed reaction is 2 a mycocerosyl-[mycocerosic acid synthase] + a phthiocerol = a dimycocerosyl phthiocerol + 2 holo-[mycocerosic acid synthase].. The enzyme catalyses 2 a mycocerosyl-[mycocerosic acid synthase] + a phthiodiolone = a dimycocerosyl phthiodiolone + 2 holo-[mycocerosic acid synthase].. It carries out the reaction 2 a mycocerosyl-[mycocerosic acid synthase] + a phenolphthiocerol = a dimycocerosyl phenolphthiocerol + 2 holo-[mycocerosic acid synthase].. Functionally, catalyzes diesterification of phthiocerol, phthiodiolone, and phenolphthiocerol with mycocerosic acids, the final step in the phthiocerol, phthiodiolone and phenolphthiocerol dimycocerosate esters (PDIM) synthesis. Can directly transfer the mycocerosate bound to the mycocerosic acid synthase (mas) onto the substrate alcohols. In Mycobacterium ulcerans (strain Agy99), this protein is Phthiocerol/phthiodiolone dimycocerosyl transferase (papA5).